The chain runs to 597 residues: Gigaxonin (597 aa).

The BTB domain occupies 30 to 99 (CDAHLVLDGE…IFSGQIRLNE (70 aa)). Residues 134–236 (CIGIRDFALH…DSSYLREQML (103 aa)) enclose the BACK domain. Kelch repeat units follow at residues 274–326 (CIVT…SAEG), 327–374 (FLFV…EIDG), 376–421 (LYIL…AMKK), 422–468 (KIYA…GVAM), 470–522 (LYVF…VYGA), and 528–574 (SIYV…AALR).

In terms of assembly, interacts with TBCB. Interacts with CUL3. Part of a complex that contains CUL3, RBX1 and GAN. Interacts (via BTB domain) with UBA1. Interacts (via Kelch domains) with MAP1B (via C-terminus) and MAP1S (via C-terminus). Post-translationally, ubiquitinated by E3 ubiquitin ligase complex formed by CUL3 and RBX1 and probably targeted for proteasome-independent degradation. In terms of tissue distribution, expressed in brain, heart and muscle (at protein level).

It is found in the cytoplasm. The protein localises to the cytoskeleton. It functions in the pathway protein modification; protein ubiquitination. Its function is as follows. Probable cytoskeletal component that directly or indirectly plays an important role in neurofilament architecture. May act as a substrate-specific adapter of an E3 ubiquitin-protein ligase complex which mediates the ubiquitination and subsequent proteasomal degradation of target proteins. Controls degradation of TBCB. Controls degradation of MAP1B and MAP1S, and is critical for neuronal maintenance and survival. In Mus musculus (Mouse), this protein is Gigaxonin.